Consider the following 134-residue polypeptide: Small ribosomal subunit protein uS11 (134 aa).

Belongs to the universal ribosomal protein uS11 family. Part of the 30S ribosomal subunit. Interacts with proteins S7 and S18. Binds to IF-3.

Located on the platform of the 30S subunit, it bridges several disparate RNA helices of the 16S rRNA. Forms part of the Shine-Dalgarno cleft in the 70S ribosome. The chain is Small ribosomal subunit protein uS11 from Acidovorax ebreus (strain TPSY) (Diaphorobacter sp. (strain TPSY)).